Here is a 243-residue protein sequence, read N- to C-terminus: Ribonuclease PH (243 aa).

Phosphate is bound by residues Arg-91 and 129–131 (GTR).

It belongs to the RNase PH family. Homohexameric ring arranged as a trimer of dimers.

It carries out the reaction tRNA(n+1) + phosphate = tRNA(n) + a ribonucleoside 5'-diphosphate. In terms of biological role, phosphorolytic 3'-5' exoribonuclease that plays an important role in tRNA 3'-end maturation. Removes nucleotide residues following the 3'-CCA terminus of tRNAs; can also add nucleotides to the ends of RNA molecules by using nucleoside diphosphates as substrates, but this may not be physiologically important. Probably plays a role in initiation of 16S rRNA degradation (leading to ribosome degradation) during starvation. In Burkholderia mallei (strain NCTC 10247), this protein is Ribonuclease PH.